A 527-amino-acid chain; its full sequence is Cytochrome P450 monooxyhenase eriA (527 aa).

A helical transmembrane segment spans residues 17–37 (LGVVDLSLLGVGAVIAFAWLF). 3 N-linked (GlcNAc...) asparagine glycosylation sites follow: Asn77, Asn274, and Asn297. Residue Cys453 coordinates heme.

The protein belongs to the cytochrome P450 family. Requires heme as cofactor.

It localises to the membrane. The catalysed reaction is cyathadiol + reduced [NADPH--hemoprotein reductase] + O2 = cyathatriol + oxidized [NADPH--hemoprotein reductase] + H2O + H(+). Its pathway is secondary metabolite biosynthesis. In terms of biological role, cytochrome P450 monooxygenase; part of the gene cluster that mediates the biosynthesis of erinacines, cyathane-xylosides that show unique biological activities, including leishmanicidal activity, stimulating activity for nerve growth-factor synthesis, and agonistic activity toward the kappa opioid receptor. Within the pathway, eriA catalyzes C-11 hydroxylation in the presence of the short chain dehydrogenase/reductase (SDR) eriH, which leads to the production of cyathatriol. The first step of the erinacines biosynthesis pathway is catalyzed by the geranylgeranyl diphosphate (GGPP) synthase eriE via conversion of farnesyl pyrophosphate and isopentyl pyrophosphate into geranylgeranyl pyrophosphate (GGPP). GGPP is then substrate of the diterpene cyclase eriG for the production of cyatha-3,12-diene. The cytochrome P450 monooxygenase eriI then hydroxylates cyatha-3,12-diene at C-14 of the seven-membered ring to produce erinacol, which is further hydroxylated at C-15 by the cytochrome P450 monooxygenase eriC to yield cyathadiol. The cytochrome P450 monooxygenase eriA then catalyzes C-11 hydroxylation in the presence of the short chain dehydrogenase/reductase (SDR) eriH, which leads to the production of cyathatriol. The acetyltransferase eriL converts cyathatriol into 11-O-acetyl-cyathatriol. The SDR eriH catalyzes further oxidation of 11-O-acetyl-cyathatriol into 1-O-acetylcyathin A3. Finally, the glycosyl transferase eriJ tranfers xylose from UDP-xylose onto C-14 of 11-O-acetyl-cyathatriol to form eracine Q. EriJ is also able to convert 11-O-acetyl-cyathatriol to eracine Q2 by using UDP-D-glucose as cosubstrate, but at a lower rate. The sequence is that of Cytochrome P450 monooxyhenase eriA from Hericium erinaceus (Lion's mane mushroom).